We begin with the raw amino-acid sequence, 112 residues long: Ribonuclease P protein component (112 aa).

It belongs to the RnpA family. In terms of assembly, consists of a catalytic RNA component (M1 or rnpB) and a protein subunit.

The catalysed reaction is Endonucleolytic cleavage of RNA, removing 5'-extranucleotides from tRNA precursor.. RNaseP catalyzes the removal of the 5'-leader sequence from pre-tRNA to produce the mature 5'-terminus. It can also cleave other RNA substrates such as 4.5S RNA. The protein component plays an auxiliary but essential role in vivo by binding to the 5'-leader sequence and broadening the substrate specificity of the ribozyme. This Pelotomaculum thermopropionicum (strain DSM 13744 / JCM 10971 / SI) protein is Ribonuclease P protein component.